The primary structure comprises 198 residues: GTP cyclohydrolase-2 (198 aa).

Position 52–56 (R52–E56) interacts with GTP. Zn(2+) contacts are provided by C57, C68, and C70. GTP-binding positions include Q73, E94–R96, and T116. The active-site Proton acceptor is the D128. R130 serves as the catalytic Nucleophile. GTP is bound by residues T151 and K156.

It belongs to the GTP cyclohydrolase II family. It depends on Zn(2+) as a cofactor.

It carries out the reaction GTP + 4 H2O = 2,5-diamino-6-hydroxy-4-(5-phosphoribosylamino)-pyrimidine + formate + 2 phosphate + 3 H(+). The protein operates within cofactor biosynthesis; riboflavin biosynthesis; 5-amino-6-(D-ribitylamino)uracil from GTP: step 1/4. Functionally, catalyzes the conversion of GTP to 2,5-diamino-6-ribosylamino-4(3H)-pyrimidinone 5'-phosphate (DARP), formate and pyrophosphate. In Vibrio parahaemolyticus serotype O3:K6 (strain RIMD 2210633), this protein is GTP cyclohydrolase-2.